We begin with the raw amino-acid sequence, 316 residues long: UPF0725 protein At1g02770 (316 aa).

Belongs to the UPF0725 (EMB2204) family.

The polypeptide is UPF0725 protein At1g02770 (Arabidopsis thaliana (Mouse-ear cress)).